The chain runs to 251 residues: Small ribosomal subunit protein uS2 (251 aa).

It belongs to the universal ribosomal protein uS2 family.

This Nitrosomonas eutropha (strain DSM 101675 / C91 / Nm57) protein is Small ribosomal subunit protein uS2.